A 181-amino-acid polypeptide reads, in one-letter code: MVIIGTVPAGLAGVLFKDFFESLFSSLTAVGFFLLVTGFLLWGSENISRRVREKLPVEKLGVRESLIIGCAQALAIAPGISRSGATISAGLFLGFERELAARYSFLLSIPAILGAALIQIKDIGAGMNLLGASMVAGFAAAAVSGYIAIKFLLKLIKERDLYIFAYYCWALGIMILAAALI.

A run of 4 helical transmembrane segments spans residues 23-43 (LFSS…LLWG), 105-125 (FLLS…DIGA), 129-149 (LLGA…YIAI), and 161-181 (LYIF…AALI).

This sequence belongs to the UppP family.

Its subcellular location is the cell membrane. The enzyme catalyses di-trans,octa-cis-undecaprenyl diphosphate + H2O = di-trans,octa-cis-undecaprenyl phosphate + phosphate + H(+). Its function is as follows. Catalyzes the dephosphorylation of undecaprenyl diphosphate (UPP). The chain is Undecaprenyl-diphosphatase (uppP) from Methanothermobacter thermautotrophicus (strain ATCC 29096 / DSM 1053 / JCM 10044 / NBRC 100330 / Delta H) (Methanobacterium thermoautotrophicum).